Consider the following 152-residue polypeptide: MSEKYVVTWDVLQMHTRKLAARLLPAERWTGIIAVSRGGLVPAAILARELGIRHVDTVCISSYDHDNQRELRVLKCAEGDGEGFIVVDDLVDTGGTAQAIRDMYPKAHFVTIFAKPAGRPLVDDYVVDIPQNTWIEQPWDMGVSFVEPLSGR.

5-phospho-alpha-D-ribose 1-diphosphate-binding positions include 37–38, arginine 69, and 88–96; these read RG and DDLVDTGGT. Arginine 69 contributes to the GMP binding site. Aspartate 89 contributes to the Mg(2+) binding site. Guanine is bound by residues aspartate 92 and isoleucine 135. Positions 92 and 135 each coordinate xanthine. Residues 92-96 and 134-135 each bind GMP; these read DTGGT and WI.

This sequence belongs to the purine/pyrimidine phosphoribosyltransferase family. XGPT subfamily. In terms of assembly, homotetramer. Mg(2+) is required as a cofactor.

Its subcellular location is the cell inner membrane. The catalysed reaction is GMP + diphosphate = guanine + 5-phospho-alpha-D-ribose 1-diphosphate. It catalyses the reaction XMP + diphosphate = xanthine + 5-phospho-alpha-D-ribose 1-diphosphate. The enzyme catalyses IMP + diphosphate = hypoxanthine + 5-phospho-alpha-D-ribose 1-diphosphate. Its pathway is purine metabolism; GMP biosynthesis via salvage pathway; GMP from guanine: step 1/1. It functions in the pathway purine metabolism; XMP biosynthesis via salvage pathway; XMP from xanthine: step 1/1. Functionally, purine salvage pathway enzyme that catalyzes the transfer of the ribosyl-5-phosphate group from 5-phospho-alpha-D-ribose 1-diphosphate (PRPP) to the N9 position of the 6-oxopurines guanine and xanthine to form the corresponding ribonucleotides GMP (guanosine 5'-monophosphate) and XMP (xanthosine 5'-monophosphate), with the release of PPi. To a lesser extent, also acts on hypoxanthine. The protein is Xanthine-guanine phosphoribosyltransferase of Edwardsiella ictaluri (strain 93-146).